The chain runs to 511 residues: UPF0288 protein MK0796 (511 aa).

The protein belongs to the UPF0288 family.

The protein is UPF0288 protein MK0796 of Methanopyrus kandleri (strain AV19 / DSM 6324 / JCM 9639 / NBRC 100938).